The primary structure comprises 236 residues: Alpha-acetolactate decarboxylase (236 aa).

It belongs to the alpha-acetolactate decarboxylase family.

It catalyses the reaction (2S)-2-acetolactate + H(+) = (R)-acetoin + CO2. Its pathway is polyol metabolism; (R,R)-butane-2,3-diol biosynthesis; (R,R)-butane-2,3-diol from pyruvate: step 2/3. Its function is as follows. Converts acetolactate into acetoin. This is Alpha-acetolactate decarboxylase (aldB) from Lactococcus lactis subsp. lactis (strain IL1403) (Streptococcus lactis).